We begin with the raw amino-acid sequence, 363 residues long: Chorismate synthase (363 aa).

R48 provides a ligand contact to NADP(+). FMN-binding positions include 125–127 (RSS), 238–239 (NA), G278, 293–297 (KPTAS), and R319.

Belongs to the chorismate synthase family. In terms of assembly, homotetramer. It depends on FMNH2 as a cofactor.

The enzyme catalyses 5-O-(1-carboxyvinyl)-3-phosphoshikimate = chorismate + phosphate. The protein operates within metabolic intermediate biosynthesis; chorismate biosynthesis; chorismate from D-erythrose 4-phosphate and phosphoenolpyruvate: step 7/7. In terms of biological role, catalyzes the anti-1,4-elimination of the C-3 phosphate and the C-6 proR hydrogen from 5-enolpyruvylshikimate-3-phosphate (EPSP) to yield chorismate, which is the branch point compound that serves as the starting substrate for the three terminal pathways of aromatic amino acid biosynthesis. This reaction introduces a second double bond into the aromatic ring system. This Acinetobacter baylyi (strain ATCC 33305 / BD413 / ADP1) protein is Chorismate synthase.